Reading from the N-terminus, the 523-residue chain is MKPFNELVQHFSDAQGRAALLGMLRGIEREALRIDESGYLALDGHPLELGSALTHSRITTDYSEALLEFITPVNHQVESLLQGLTETHAYSVRHLHGQRLWPVSMPCYVKDEANIPIARYGTSNTGKMKTLYRKGLTYRYGALMQIISGVHFNFSVSQELWQSLYELSDKSLSFDDFISESYFGLIRNYRRLVWVLPYLFGASPALCNSFIKGQKTDLRFEKSGRGTLYLPYATSLRMSDLGYTNKEQADLNISYNSLPEYLAGIRAAIKMPSANFANIGVKVDGEYRQLNANVLQIENEFYSPIRAKRVTKSGEKPSEALARAGVEYIEVRALDVNPFSPIGIEASQVRFLDLFLLYCLLTPSPKSDAAEEARLSANLKSVVLEGRKPGLELHTATGTLSLQTWLLELFDNLSSLAVLLDGETNAYQAALAHWRDAVVDPQKTLSGQVLQQLVTKGQDHGQWVMSLAQQYHQYFIDYPLSSEAASDYDAEAQSSLAKQVELEAAQSAVSLDDYLTDYFGAPA.

Belongs to the glutamate--cysteine ligase type 1 family. Type 1 subfamily.

It catalyses the reaction L-cysteine + L-glutamate + ATP = gamma-L-glutamyl-L-cysteine + ADP + phosphate + H(+). The protein operates within sulfur metabolism; glutathione biosynthesis; glutathione from L-cysteine and L-glutamate: step 1/2. The protein is Glutamate--cysteine ligase of Shewanella oneidensis (strain ATCC 700550 / JCM 31522 / CIP 106686 / LMG 19005 / NCIMB 14063 / MR-1).